Consider the following 1007-residue polypeptide: Inversin-A (1007 aa).

ANK repeat units follow at residues 9–39, 43–72, 76–105, 109–140, 144–173, 177–209, 216–246, 250–279, 284–313, 317–346, 352–381, 385–414, 418–447, 451–480, 484–513, and 519–549; these read SLAS…VIDQ, LGRT…QVNH, SGRT…DCTH, RDIT…QVDA, RKQT…NIGI, EGKI…TESL, EGRT…NVAP, LFRT…SPNI, QGAT…VRDE, EGRT…ELEV, YGGT…QVDA, MKHT…KVHL, DGRS…NPDA, EGRT…DPNI, NGRT…FPNQ, and ERYT…SIAA. Positions 486-494 match the D-box 1 motif; the sequence is RTALHWSCN. The region spanning 551–580 is the IQ 1 domain; it reads QDIAASKIQAVYKGHKVRRAFQERKNLLMK. 2 stretches are compositionally biased toward basic and acidic residues: residues 585-599 and 608-652; these read RKGA…ENRQ and GKQK…HQEE. 2 disordered regions span residues 585-837 and 868-893; these read RKGA…KEFS and SAKS…SALK. A compositionally biased stretch (polar residues) spans 684–701; it reads IQSSPIEHVHTNSIQTRM. A compositionally biased stretch (low complexity) spans 702-712; it reads SPSRTSISHSS. Residues 727–745 show a composition bias toward polar residues; that stretch reads NPTQNNTQPRRTSRPQIES. A compositionally biased stretch (basic and acidic residues) spans 751 to 771; that stretch reads HRIEDLVQKESRRKSHREERK. Residues 772 to 784 show a composition bias toward basic residues; the sequence is GSHRQRASSHHRL. Residues 870–893 are compositionally biased toward polar residues; that stretch reads KSGQRPLTETQSPEKACQGSSALK. A D-box 2 motif is present at residues 964–972; it reads RKQLFQRKK. The IQ 2 domain maps to 971-1000; that stretch reads KKHAATVIQKAWRTYCIRKSSRKTRHSHLR.

As to quaternary structure, interacts with apc2. Binds calmodulin.

It localises to the cytoplasm. The protein resides in the cytoskeleton. Its function is as follows. Required for normal renal development and establishment of left-right axis. Probably acts as a molecular switch between different Wnt signaling pathways. Inhibits the canonical Wnt pathway by targeting cytoplasmic disheveled for degradation by the ubiquitin-proteasome. This suggests that it is required in renal development to oppose the repression of terminal differentiation of tubular epithelial cells by Wnt signaling. Plays a central role in convergent extension movements in gastrulating embryos, a processus regulated by Wnt signaling. In Xenopus laevis (African clawed frog), this protein is Inversin-A (invs-a).